The sequence spans 339 residues: HTH-type transcriptional regulator KdgR (339 aa).

The HTH lacI-type domain maps to 9-64 (TTIKDVAECAGVSKSTVSRYINGKIDAISPEKVKNIKKAIAELNYRPSKMAQGLKI). The segment at residues 11–30 (IKDVAECAGVSKSTVSRYIN) is a DNA-binding region (H-T-H motif).

Its function is as follows. Transcriptional repressor of the kdgRKAT and kduID operons for pectin utilization. This chain is HTH-type transcriptional regulator KdgR (kdgR), found in Bacillus subtilis (strain 168).